The chain runs to 81 residues: MSHTVKIYDTCIGCTQCVRACPTDVLEMVPWDGCKAGQIASSPRTEDCVGCKRCETACPTDFLSIRVYLGAETTRSMGLAY.

2 4Fe-4S ferredoxin-type domains span residues 1 to 31 and 37 to 68; these read MSHTVKIYDTCIGCTQCVRACPTDVLEMVPW and GQIASSPRTEDCVGCKRCETACPTDFLSIRVY. [4Fe-4S] cluster contacts are provided by cysteine 11, cysteine 14, cysteine 17, cysteine 21, cysteine 48, cysteine 51, cysteine 54, and cysteine 58.

As to quaternary structure, the cyanobacterial PSI reaction center is composed of one copy each of PsaA,B,C,D,E,F,I,J,K,L,M and X, and forms trimeric complexes. [4Fe-4S] cluster serves as cofactor.

Its subcellular location is the cellular thylakoid membrane. The enzyme catalyses reduced [plastocyanin] + hnu + oxidized [2Fe-2S]-[ferredoxin] = oxidized [plastocyanin] + reduced [2Fe-2S]-[ferredoxin]. Functionally, apoprotein for the two 4Fe-4S centers FA and FB of photosystem I (PSI); essential for photochemical activity. FB is the terminal electron acceptor of PSI, donating electrons to ferredoxin. The C-terminus interacts with PsaA/B/D and helps assemble the protein into the PSI complex. Required for binding of PsaD and PsaE to PSI. PSI is a plastocyanin/cytochrome c6-ferredoxin oxidoreductase, converting photonic excitation into a charge separation, which transfers an electron from the donor P700 chlorophyll pair to the spectroscopically characterized acceptors A0, A1, FX, FA and FB in turn. In Acaryochloris marina (strain MBIC 11017), this protein is Photosystem I iron-sulfur center.